A 497-amino-acid chain; its full sequence is Delayed-rectifier potassium channel regulatory subunit KCNS1 (497 aa).

The Cytoplasmic segment spans residues 1 to 186 (MVSEFPGPGS…LTMENPGYSL (186 aa)). A helical transmembrane segment spans residues 187-208 (PSKLFSCVSIGVVLASIAAMCI). Over 209–239 (HSLPEYQAREAAAAVAAVAAGRSAEEVRDDP) the chain is Extracellular. Residues 240 to 262 (VLRRLEYFCIAWFSFEVSSRLLL) traverse the membrane as a helical segment. Residues 263-273 (APSTRNFFCHP) lie on the Cytoplasmic side of the membrane. Residues 274–291 (LNLIDIVSVLPFYLTLLA) traverse the membrane as a helical segment. The Extracellular portion of the chain corresponds to 292 to 309 (GAALGDQRGASGEELGDL). The chain crosses the membrane as a helical; Voltage-sensor span at residues 310 to 330 (GKVVQVFRLMRIFRVLKLARH). Residues 331–345 (STGLRSLGATLKHSY) are Cytoplasmic-facing. A helical transmembrane segment spans residues 346–367 (REVGILLLYLAVGVSVFSGVAY). Residues 368 to 379 (TAEEENEGFHTI) are Extracellular-facing. An intramembrane region (helical) is located at residues 380–391 (PACWWWGTVSMT). Residues 392–397 (TVGYGD) carry the Selectivity filter motif. Residues 392–399 (TVGYGDVV) lie within the membrane without spanning it. Over 400–406 (PETVGGK) the chain is Extracellular. The helical transmembrane segment at 407-435 (LAASGCILGGILVVALPITIIFNKFSHFY) threads the bilayer. At 436-497 (RRQKALEAAV…PREPAKSHSY (62 aa)) the chain is on the cytoplasmic side. A disordered region spans residues 464–497 (SDVSLETSRDTSQEGRSTDLETQAPREPAKSHSY). Residues 470–482 (TSRDTSQEGRSTD) show a composition bias toward basic and acidic residues.

It belongs to the potassium channel family. S (TC 1.A.1.2) subfamily. Kv9.1/KCNS1 sub-subfamily. As to quaternary structure, heterotetramer with KCNB1 and KCNB2. Does not form homomultimers. As to expression, detected in brain, but not in the other tissues tested. The highest levels of expression are in olfactory bulb, cerebral cortex, hippocampus, habenula, basolateral amygdaloid nuclei and cerebellum.

The protein resides in the cell membrane. Functionally, potassium channel regulatory subunit that modulate the delayed rectifier voltage-gated potassium channel activity of KCNB1 and KCNB2 by altering their kinetics, expression levels, and shifting the half-inactivation potential to more polarized values. While it does not form functional channels on its own, it can form functional heterotetrameric channels with KCNB1 and KCNB2. Each regulatory subunit has unique regulatory properties that can lead to extensive inhibition, significant changes in kinetics, and/or substantial shifts in the voltage dependencies of the inactivation process. In Mus musculus (Mouse), this protein is Delayed-rectifier potassium channel regulatory subunit KCNS1.